A 65-amino-acid polypeptide reads, in one-letter code: U12-theraphotoxin-Cg1a (65 aa).

Residues 1–21 (MKTSVLLFMLGLTFLFDGLAA) form the signal peptide. The propeptide occupies 22–29 (INLQEGER). 3 disulfides stabilise this stretch: Cys-31-Cys-45, Cys-38-Cys-50, and Cys-44-Cys-57.

The protein belongs to the neurotoxin 10 (Hwtx-1) family. 31 (Jztx-15) subfamily. In terms of tissue distribution, expressed by the venom gland.

The protein resides in the secreted. Functionally, probable ion channel inhibitor. This is U12-theraphotoxin-Cg1a from Chilobrachys guangxiensis (Chinese earth tiger tarantula).